Consider the following 340-residue polypeptide: Short-chain dehydrogenase/reductase ffsI (340 aa).

Positions 46, 71, 96, 123, 211, and 215 each coordinate NADP(+). Tyr211 serves as the catalytic Proton acceptor. The active-site Lowers pKa of active site Tyr is the Lys215.

It belongs to the short-chain dehydrogenases/reductases (SDR) family.

It participates in mycotoxin biosynthesis. In terms of biological role, short-chain dehydrogenase/reductase; part of the gene cluster that mediates the biosynthesis of the cytotoxic leucine-containing cytochalasans, including aspochalasin C, aspochalasin E, TMC-169, flavichalasine F, aspergillin PZ, aspochalasin M and flavichalasine G. The first step in the pathway is catalyzed by the hybrid PKS-NRPS ffsA that utilizes 8 units of malonyl-CoA to iteratively assemble the octaketide chain before addition of L-leucine by the C-terminal NRPS modules. Because ffsA lacks a designated enoylreductase (ER) domain, the required activity is provided the enoyl reductase fssC. The methyltransferase (MT) domain of ffsA catalyzes the alpha-methylation at C10 and C14 using S-adenosyl-L-methionine as the methyl-donating cosubstrate. Reduction by the hydrolyase ffsE, followed by dehydration and intra-molecular Diels-Alder cyclization by the Diels-Alderase ffsF then yield the required isoindolone-fused macrocycle. A number of oxidative steps catalyzed by the tailoring cytochrome P450 monooxygenase ffsD, the FAD-linked oxidoreductase ffsJ and the short-chain dehydrogenase/reductase ffsI, are further required to afford the final products. The sequence is that of Short-chain dehydrogenase/reductase ffsI from Aspergillus flavipes.